A 261-amino-acid chain; its full sequence is Cytochrome c oxidase subunit 3 (261 aa).

The Mitochondrial matrix segment spans residues 1-15 (MTHQTHSYHMVNPSP). Residues 16–34 (WPLTGALSALLMTSGLIMW) traverse the membrane as a helical segment. Residues 35–40 (FHFNSM) are Mitochondrial intermembrane-facing. Residues 41–66 (ILLTLGLSTNILTMYQWWRDIIREST) traverse the membrane as a helical segment. Topologically, residues 67-72 (FQGHHT) are mitochondrial matrix. The chain crosses the membrane as a helical span at residues 73–105 (PTVQKGLRYGMILFIVSEVLFFTGFFWAFYHSS). The Mitochondrial intermembrane portion of the chain corresponds to 106–128 (LAPTPELGGCWPPTGIHPLNPLE). Residues 129–152 (VPLLNTSVLLASGVSITWAHHSLM) form a helical membrane-spanning segment. The Mitochondrial matrix segment spans residues 153-155 (EGN). Residues 156–183 (RKHMLQALFITIALGLYFTLLQASEYYE) traverse the membrane as a helical segment. Over 184-190 (APFTISD) the chain is Mitochondrial intermembrane. A helical transmembrane segment spans residues 191–223 (GIYGSTFFVATGFHGLHVIIGSTFLIVCFLRQV). The Mitochondrial matrix portion of the chain corresponds to 224–232 (KFHFTSNHH). The helical transmembrane segment at 233–256 (FGFERAAWYWHFVDVVWLFLYVSI) threads the bilayer. At 257-261 (YWWGS) the chain is on the mitochondrial intermembrane side.

This sequence belongs to the cytochrome c oxidase subunit 3 family. In terms of assembly, component of the cytochrome c oxidase (complex IV, CIV), a multisubunit enzyme composed of 14 subunits. The complex is composed of a catalytic core of 3 subunits MT-CO1, MT-CO2 and MT-CO3, encoded in the mitochondrial DNA, and 11 supernumerary subunits COX4I, COX5A, COX5B, COX6A, COX6B, COX6C, COX7A, COX7B, COX7C, COX8 and NDUFA4, which are encoded in the nuclear genome. The complex exists as a monomer or a dimer and forms supercomplexes (SCs) in the inner mitochondrial membrane with NADH-ubiquinone oxidoreductase (complex I, CI) and ubiquinol-cytochrome c oxidoreductase (cytochrome b-c1 complex, complex III, CIII), resulting in different assemblies (supercomplex SCI(1)III(2)IV(1) and megacomplex MCI(2)III(2)IV(2)).

It localises to the mitochondrion inner membrane. It carries out the reaction 4 Fe(II)-[cytochrome c] + O2 + 8 H(+)(in) = 4 Fe(III)-[cytochrome c] + 2 H2O + 4 H(+)(out). Its function is as follows. Component of the cytochrome c oxidase, the last enzyme in the mitochondrial electron transport chain which drives oxidative phosphorylation. The respiratory chain contains 3 multisubunit complexes succinate dehydrogenase (complex II, CII), ubiquinol-cytochrome c oxidoreductase (cytochrome b-c1 complex, complex III, CIII) and cytochrome c oxidase (complex IV, CIV), that cooperate to transfer electrons derived from NADH and succinate to molecular oxygen, creating an electrochemical gradient over the inner membrane that drives transmembrane transport and the ATP synthase. Cytochrome c oxidase is the component of the respiratory chain that catalyzes the reduction of oxygen to water. Electrons originating from reduced cytochrome c in the intermembrane space (IMS) are transferred via the dinuclear copper A center (CU(A)) of subunit 2 and heme A of subunit 1 to the active site in subunit 1, a binuclear center (BNC) formed by heme A3 and copper B (CU(B)). The BNC reduces molecular oxygen to 2 water molecules using 4 electrons from cytochrome c in the IMS and 4 protons from the mitochondrial matrix. This Balaenoptera musculus (Blue whale) protein is Cytochrome c oxidase subunit 3 (MT-CO3).